The primary structure comprises 65 residues: Putative beta-neurotoxin RjAa7 (65 aa).

The LCN-type CS-alpha/beta domain occupies 1–64 (KEGYPVGRDG…VWDSSTNKCG (64 aa)). Intrachain disulfides connect Cys11–Cys63, Cys15–Cys37, Cys22–Cys44, and Cys26–Cys46.

This sequence belongs to the long (4 C-C) scorpion toxin superfamily. Sodium channel inhibitor family. Beta subfamily. In terms of tissue distribution, expressed by the venom gland.

The protein localises to the secreted. In terms of biological role, beta toxins bind voltage-independently at site-4 of sodium channels (Nav) and shift the voltage of activation toward more negative potentials thereby affecting sodium channel activation and promoting spontaneous and repetitive firing. The protein is Putative beta-neurotoxin RjAa7 of Rhopalurus junceus (Caribbean blue scorpion).